A 178-amino-acid polypeptide reads, in one-letter code: Large ribosomal subunit protein uL6 (178 aa).

The disordered stretch occupies residues 159 to 178 (GKGIRYEGEHVRRKEGKTGK).

Belongs to the universal ribosomal protein uL6 family. As to quaternary structure, part of the 50S ribosomal subunit.

Its function is as follows. This protein binds to the 23S rRNA, and is important in its secondary structure. It is located near the subunit interface in the base of the L7/L12 stalk, and near the tRNA binding site of the peptidyltransferase center. The polypeptide is Large ribosomal subunit protein uL6 (Listeria monocytogenes serotype 4b (strain CLIP80459)).